The following is a 274-amino-acid chain: MSDSQDPTTSPVVTTQVELGGCSRQGGGNGFLRFRQHQEVQAFLSLLEDSFVQEFLSKDPCFQISDKYLLAMVLVYFQRAHLKLSEYTHSSLFLALYLANDMEEDLEGPKCEIFPWALGKDWCLRVGKFLHQRDKLWARMGFRAVVSRQCCEEVMAKEPFHWAWTRDRRPHHGGVQRVCPQVPVRLPRGPGLSPPHCSPCGLPQHCSSHLLKPVSSKCPSLTSECHRPPSQNYLSRVKNAWGGDFLIVLPPQMQLEPGTYSLRIFPKPPARPGH.

The speedy/Ringo box; Required for CDK-binding stretch occupies residues His37 to Arg169.

The protein belongs to the Speedy/Ringo family. In terms of assembly, interacts with CDK1 and CDK2. Interacts with AURKB. As to expression, expressed in a variety of tissues including bone marrow, kidney, small intestine, liver, placenta and testis.

It is found in the cytoplasm. Its function is as follows. Promotes progression through the cell cycle via binding and activation of CDK1 and CDK2. Involved in the spindle-assembly checkpoint. Required for recruitment of MAD2L1, BUBR1 and BUB1 to kinetochores. Required for the correct localization of the active form of Aurora B in prometaphase. The chain is Speedy protein C from Homo sapiens (Human).